A 364-amino-acid polypeptide reads, in one-letter code: MTRLRKIIHVDMDAFYASVEQRDDPSLRGKPVVVAWRGARSVVCAASYEARVFGVRSAMPAVRAERLCPDAIFVPPDFARYKAVSQQVRAIFLRHTDLVEPLSLDEAYLDVSEPKSGIELATDIARTIRAQIREETNLTASAGIAPNKFLAKIASDWRKPDGQFVIPPQRVDAFLAPLPVNRVPGVGKVMEGKLAARGIVTCGDLRQWALIDLEEAFGSFGRSLYNRARGIDERPVEPDQQVQSISSEDTFAEDLLLEDLTEAIVQLAGKTWNATRKTERIGHTVVLKLKTAQFRILTRSFTPERPPESMEELRDIALALRARVDLPAETRYRLVGVGLGGFREKEAVVQGELFEQGPNDSPRS.

The region spanning 7–187 (IIHVDMDAFY…LPVNRVPGVG (181 aa)) is the UmuC domain. Aspartate 11 and aspartate 105 together coordinate Mg(2+). Residue glutamate 106 is part of the active site.

It belongs to the DNA polymerase type-Y family. Monomer. Mg(2+) is required as a cofactor.

Its subcellular location is the cytoplasm. The catalysed reaction is DNA(n) + a 2'-deoxyribonucleoside 5'-triphosphate = DNA(n+1) + diphosphate. In terms of biological role, poorly processive, error-prone DNA polymerase involved in untargeted mutagenesis. Copies undamaged DNA at stalled replication forks, which arise in vivo from mismatched or misaligned primer ends. These misaligned primers can be extended by PolIV. Exhibits no 3'-5' exonuclease (proofreading) activity. May be involved in translesional synthesis, in conjunction with the beta clamp from PolIII. This chain is DNA polymerase IV, found in Stenotrophomonas maltophilia (strain K279a).